A 314-amino-acid chain; its full sequence is tRNA dimethylallyltransferase (314 aa).

The tract at residues 1-24 (MAEEPQRSPAPTSPFAFTVPSNPL) is disordered. 40–47 (GPTASGKS) is an ATP binding site. Residue 42–47 (TASGKS) coordinates substrate.

It belongs to the IPP transferase family. In terms of assembly, monomer. Requires Mg(2+) as cofactor.

It catalyses the reaction adenosine(37) in tRNA + dimethylallyl diphosphate = N(6)-dimethylallyladenosine(37) in tRNA + diphosphate. Catalyzes the transfer of a dimethylallyl group onto the adenine at position 37 in tRNAs that read codons beginning with uridine, leading to the formation of N6-(dimethylallyl)adenosine (i(6)A). This is tRNA dimethylallyltransferase from Cereibacter sphaeroides (strain ATCC 17029 / ATH 2.4.9) (Rhodobacter sphaeroides).